Here is an 849-residue protein sequence, read N- to C-terminus: Disks large homolog 3 (849 aa).

The interval 32 to 101 is disordered; sequence DWQVPDPYGP…GKSTPKLNGS (70 aa). Residues 41 to 53 show a composition bias toward gly residues; it reads PSGGNGASSGYGG. The segment covering 57-69 has biased composition (polar residues); that stretch reads QTLPSQAGATPTP. PDZ domains lie at 149–235, 244–330, and 404–484; these read EIVL…VRRR, EVNL…VAKP, and KIIL…AQYR. Ser157 is modified (phosphoserine). The 71-residue stretch at 519-589 folds into the SH3 domain; sequence KRSLYVRALF…PSKKRVEKKE (71 aa). A Guanylate kinase-like domain is found at 659 to 834; it reads ARPVIILGPM…IYNKIKQIIE (176 aa). Tyr705 carries the post-translational modification Phosphotyrosine.

Belongs to the MAGUK family. In terms of assembly, interacts through its PDZ domains with NETO1, GRIN2B, SYNGAP1 and APC. Interacts through its first two PDZ domains with ERBB4. Interacts through its third PDZ domain with NLGN1, and probably with NLGN2 and NLGN3. Interacts through its guanylate kinase-like domain with DLGAP1, DLGAP2, DLGAP3 and DLGAP4. Interacts with FRMPD4 (via C-terminus). Interacts with LRFN1, LRFN2 and LRFN4. Interacts with FLTP. Interacts with GPR85. Interacts with DGKI (via PDZ-binding motif).

Functionally, required for learning most likely through its role in synaptic plasticity following NMDA receptor signaling. The polypeptide is Disks large homolog 3 (Dlg3) (Mus musculus (Mouse)).